We begin with the raw amino-acid sequence, 354 residues long: Probable cinnamyl alcohol dehydrogenase 1 (354 aa).

Zn(2+) contacts are provided by Cys-47, His-69, Glu-70, Cys-100, Cys-103, Cys-106, Cys-114, and Cys-163. NADP(+) contacts are provided by residues Thr-167, 188-193 (GLGGLG), 211-216 (STSESK), Thr-251, and 297-299 (SVT).

The protein belongs to the zinc-containing alcohol dehydrogenase family. Homodimer. Zn(2+) is required as a cofactor.

The enzyme catalyses (E)-cinnamyl alcohol + NADP(+) = (E)-cinnamaldehyde + NADPH + H(+). It catalyses the reaction (E)-coniferol + NADP(+) = (E)-coniferaldehyde + NADPH + H(+). It carries out the reaction (E)-sinapyl alcohol + NADP(+) = (E)-sinapaldehyde + NADPH + H(+). The catalysed reaction is (E)-4-coumaroyl alcohol + NADP(+) = (E)-4-coumaraldehyde + NADPH + H(+). The enzyme catalyses (E)-caffeyl alcohol + NADP(+) = (E)-caffeyl aldehyde + NADPH + H(+). The protein operates within aromatic compound metabolism; phenylpropanoid biosynthesis. Functionally, involved in lignin biosynthesis. Catalyzes the final step specific for the production of lignin monomers. Catalyzes the NADPH-dependent reduction of coniferaldehyde, 5-hydroxyconiferaldehyde, sinapaldehyde, 4-coumaraldehyde and caffeyl aldehyde to their respective alcohols. This is Probable cinnamyl alcohol dehydrogenase 1 from Oryza sativa subsp. japonica (Rice).